The sequence spans 125 residues: Large ribosomal subunit protein eL31 (125 aa).

At Met1 the chain carries N-acetylmethionine. The residue at position 15 (Ser15) is a Phosphoserine. N6-succinyllysine occurs at positions 55 and 70. Lys75 is modified (N6-acetyllysine; alternate). Lys75 carries the N6-succinyllysine; alternate modification. Position 98 is a phosphoserine (Ser98).

Belongs to the eukaryotic ribosomal protein eL31 family. Component of the large ribosomal subunit.

The protein localises to the cytoplasm. In terms of biological role, component of the large ribosomal subunit. The ribosome is a large ribonucleoprotein complex responsible for the synthesis of proteins in the cell. The sequence is that of Large ribosomal subunit protein eL31 (RPL31) from Pongo abelii (Sumatran orangutan).